Here is a 75-residue protein sequence, read N- to C-terminus: uncharacterized protein (75 aa).

This is an uncharacterized protein from Orgyia pseudotsugata (Douglas-fir tussock moth).